Reading from the N-terminus, the 134-residue chain is Cytochrome b (134 aa).

A run of 3 helical transmembrane segments spans residues 33-53, 77-98, and 113-133; these read FGSL…FLAM, WLLR…YLHV, and WNIG…GYVL. Residues His83 and His97 each coordinate heme b.

This sequence belongs to the cytochrome b family. As to quaternary structure, the cytochrome bc1 complex contains 11 subunits: 3 respiratory subunits (MT-CYB, CYC1 and UQCRFS1), 2 core proteins (UQCRC1 and UQCRC2) and 6 low-molecular weight proteins (UQCRH/QCR6, UQCRB/QCR7, UQCRQ/QCR8, UQCR10/QCR9, UQCR11/QCR10 and a cleavage product of UQCRFS1). This cytochrome bc1 complex then forms a dimer. Heme b is required as a cofactor.

The protein resides in the mitochondrion inner membrane. Functionally, component of the ubiquinol-cytochrome c reductase complex (complex III or cytochrome b-c1 complex) that is part of the mitochondrial respiratory chain. The b-c1 complex mediates electron transfer from ubiquinol to cytochrome c. Contributes to the generation of a proton gradient across the mitochondrial membrane that is then used for ATP synthesis. The polypeptide is Cytochrome b (MT-CYB) (Sturnira tildae (Tilda's yellow-shouldered bat)).